The sequence spans 293 residues: Ribosomal protein L11 methyltransferase (293 aa).

T145, G166, D188, and N230 together coordinate S-adenosyl-L-methionine.

It belongs to the methyltransferase superfamily. PrmA family.

It localises to the cytoplasm. The enzyme catalyses L-lysyl-[protein] + 3 S-adenosyl-L-methionine = N(6),N(6),N(6)-trimethyl-L-lysyl-[protein] + 3 S-adenosyl-L-homocysteine + 3 H(+). In terms of biological role, methylates ribosomal protein L11. The chain is Ribosomal protein L11 methyltransferase from Shewanella frigidimarina (strain NCIMB 400).